A 199-amino-acid chain; its full sequence is NAD(P)H dehydrogenase (quinone) (199 aa).

The region spanning 4 to 190 (VLVLYYSSWG…DGARFQGRHV (187 aa)) is the Flavodoxin-like domain. FMN is bound by residues 10 to 15 (SSWGHV) and 78 to 80 (TRY). Position 12 (tryptophan 12) interacts with NAD(+). Tryptophan 98 contacts substrate. FMN-binding positions include 113-119 (STASQHG) and histidine 134.

It belongs to the WrbA family. Requires FMN as cofactor.

The catalysed reaction is a quinone + NADH + H(+) = a quinol + NAD(+). It carries out the reaction a quinone + NADPH + H(+) = a quinol + NADP(+). The protein is NAD(P)H dehydrogenase (quinone) of Methylorubrum extorquens (strain CM4 / NCIMB 13688) (Methylobacterium extorquens).